The primary structure comprises 301 residues: Sulfate adenylyltransferase subunit 2 (301 aa).

The disordered stretch occupies residues 279-301 (RQGRLIDRDEAGSMEKKKREGYF).

The protein belongs to the PAPS reductase family. CysD subfamily. As to quaternary structure, sulfate-activating enzymes, NodP and NodQ, may be physically associated.

The enzyme catalyses sulfate + ATP + H(+) = adenosine 5'-phosphosulfate + diphosphate. In terms of biological role, proposed to provide activated sulfate for transfer to nod factor. The sequence is that of Sulfate adenylyltransferase subunit 2 (nodP) from Rhizobium sp. (strain N33).